The chain runs to 436 residues: GTPase Der (436 aa).

EngA-type G domains follow at residues 4–167 (PIVA…GEEE) and 176–351 (IRLS…ENHK). GTP-binding positions include 10 to 17 (GRPNVGKS), 57 to 61 (DTGGI), 119 to 122 (NKVD), 182 to 189 (GRPNVGKS), 229 to 233 (DTAGM), and 294 to 297 (NKWD). The KH-like domain occupies 352–436 (KRVQSSTLNE…PIHIIARKRN (85 aa)).

This sequence belongs to the TRAFAC class TrmE-Era-EngA-EngB-Septin-like GTPase superfamily. EngA (Der) GTPase family. As to quaternary structure, associates with the 50S ribosomal subunit.

Functionally, GTPase that plays an essential role in the late steps of ribosome biogenesis. This chain is GTPase Der, found in Staphylococcus aureus (strain USA300).